Here is a 145-residue protein sequence, read N- to C-terminus: uncharacterized protein (145 aa).

This is an uncharacterized protein from Bacillus anthracis.